We begin with the raw amino-acid sequence, 190 residues long: Shikimate kinase (190 aa).

Gly-14–Thr-19 contributes to the ATP binding site. Ser-18 contributes to the Mg(2+) binding site. The substrate site is built by Asp-36, Arg-60, and Gly-82. Arg-120 is an ATP binding site. Arg-147 lines the substrate pocket.

The protein belongs to the shikimate kinase family. In terms of assembly, monomer. Requires Mg(2+) as cofactor.

The protein localises to the cytoplasm. It carries out the reaction shikimate + ATP = 3-phosphoshikimate + ADP + H(+). It participates in metabolic intermediate biosynthesis; chorismate biosynthesis; chorismate from D-erythrose 4-phosphate and phosphoenolpyruvate: step 5/7. Its function is as follows. Catalyzes the specific phosphorylation of the 3-hydroxyl group of shikimic acid using ATP as a cosubstrate. The sequence is that of Shikimate kinase from Chlorobium phaeobacteroides (strain DSM 266 / SMG 266 / 2430).